A 306-amino-acid polypeptide reads, in one-letter code: UDP-N-acetylenolpyruvoylglucosamine reductase (306 aa).

Positions 28-194 (KIGNISKLFL…LKTELNLKKE (167 aa)) constitute an FAD-binding PCMH-type domain. The active-site Proton donor is serine 223. Residue glutamate 295 is part of the active site.

The protein belongs to the MurB family. The cofactor is FAD.

The protein localises to the cytoplasm. It catalyses the reaction UDP-N-acetyl-alpha-D-muramate + NADP(+) = UDP-N-acetyl-3-O-(1-carboxyvinyl)-alpha-D-glucosamine + NADPH + H(+). It functions in the pathway cell wall biogenesis; peptidoglycan biosynthesis. Its function is as follows. Cell wall formation. This Borrelia garinii subsp. bavariensis (strain ATCC BAA-2496 / DSM 23469 / PBi) (Borreliella bavariensis) protein is UDP-N-acetylenolpyruvoylglucosamine reductase.